The primary structure comprises 463 residues: Asparagine--tRNA ligase (463 aa).

It belongs to the class-II aminoacyl-tRNA synthetase family. In terms of assembly, homodimer.

It is found in the cytoplasm. The enzyme catalyses tRNA(Asn) + L-asparagine + ATP = L-asparaginyl-tRNA(Asn) + AMP + diphosphate + H(+). In Alkaliphilus metalliredigens (strain QYMF), this protein is Asparagine--tRNA ligase.